We begin with the raw amino-acid sequence, 382 residues long: MSIYTRPVMLLLCGLLLLTLAIAVLNTLVPLWLAQANLPTWQVGMVSSSYFTGNLVGTLFTGYLIKRIGFNRSYYLASLIFAAGCVGLGVMVGFWSWMSWRFIAGIGCAMIWVVVESALMCSGTSHNRGRLLAAYMMVYYMGTFLGQLLVSKVSGELLHVLPWVTGMILAGILPLLFTRIVNQQTQARHSSSISAMLKLRQARLGVNGCIISGIVLGSLYGLMPLYLKHQGMANASIGFWMAVLVSAGILGQWPMGRLADKFGRLLVLRVQVFVVILGSIAMLTQAAMAPALFILGAAGFTLYPVAMAWACEKVEHHQLVAMNQALLLSYTVGSLLGPSFAAMLMQNYSDNLLFIMIASVSFIYLLMLLRNVGQTPNPVAHI.

Topologically, residues 1 to 7 (MSIYTRP) are cytoplasmic. Residues 8-28 (VMLLLCGLLLLTLAIAVLNTL) form a helical membrane-spanning segment. Residues 29 to 44 (VPLWLAQANLPTWQVG) lie on the Periplasmic side of the membrane. A helical transmembrane segment spans residues 45-65 (MVSSSYFTGNLVGTLFTGYLI). At 66 to 74 (KRIGFNRSY) the chain is on the cytoplasmic side. A helical membrane pass occupies residues 75-95 (YLASLIFAAGCVGLGVMVGFW). At 96-101 (SWMSWR) the chain is on the periplasmic side. A helical transmembrane segment spans residues 102–122 (FIAGIGCAMIWVVVESALMCS). Over 123-130 (GTSHNRGR) the chain is Cytoplasmic. The chain crosses the membrane as a helical span at residues 131–151 (LLAAYMMVYYMGTFLGQLLVS). The Periplasmic segment spans residues 152–156 (KVSGE). Residues 157-177 (LLHVLPWVTGMILAGILPLLF) form a helical membrane-spanning segment. Residues 178 to 203 (TRIVNQQTQARHSSSISAMLKLRQAR) lie on the Cytoplasmic side of the membrane. Residues 204–224 (LGVNGCIISGIVLGSLYGLMP) form a helical membrane-spanning segment. Residues 225 to 230 (LYLKHQ) are Periplasmic-facing. A helical transmembrane segment spans residues 231 to 251 (GMANASIGFWMAVLVSAGILG). The Cytoplasmic segment spans residues 252-269 (QWPMGRLADKFGRLLVLR). Transmembrane regions (helical) follow at residues 270–290 (VQVF…AMAP) and 291–311 (ALFI…AWAC). Residues 312–324 (EKVEHHQLVAMNQ) are Cytoplasmic-facing. A helical transmembrane segment spans residues 325–345 (ALLLSYTVGSLLGPSFAAMLM). At 346 to 348 (QNY) the chain is on the periplasmic side. The helical transmembrane segment at 349 to 369 (SDNLLFIMIASVSFIYLLMLL) threads the bilayer. Residues 370-382 (RNVGQTPNPVAHI) are Cytoplasmic-facing.

It belongs to the major facilitator superfamily. YcaD (TC 2.A.1.26) family.

The protein localises to the cell inner membrane. This is an uncharacterized protein from Salmonella typhi.